Reading from the N-terminus, the 107-residue chain is Precursor of CEP14 (107 aa).

An N-terminal signal peptide occupies residues 1–21 (MAVRLIPTIWLFIVFAVIVSA). Residues 22 to 92 (LPSLVSSRKL…GKLRSRHLST (71 aa)) constitute a propeptide that is removed on maturation. N-linked (GlcNAc...) asparagine glycosylation is present at Asn-39. The segment at 43 to 76 (REEEKSHMPHVTKTSTLSALPKGKIPNSTPSKKG) is disordered. Residues Pro-101 and Pro-103 each carry the hydroxyproline modification.

The protein belongs to the C-terminally encoded plant signaling peptide (CEP) family. In terms of assembly, interacts with CEP receptors (e.g. CEPR1 and CEPR2). The mature small signaling peptide is generated by proteolytic processing of the longer precursor.

The protein localises to the secreted. It is found in the extracellular space. It localises to the apoplast. Extracellular signaling peptide that may regulate primary root growth rate and systemic nitrogen (N)-demand signaling. In Arabidopsis thaliana (Mouse-ear cress), this protein is Precursor of CEP14.